The chain runs to 1016 residues: DENN domain-containing protein 1A (1016 aa).

The uDENN domain maps to F13–V145. The 137-residue stretch at E162–K298 folds into the cDENN domain. The dDENN domain maps to V300 to G378. Residues F381–F385 carry the FXDXF motif motif. The tract at residues D453–A565 is disordered. Residue S473 is modified to Phosphoserine. The span at Q479–P489 shows a compositional bias: basic and acidic residues. The segment covering P500–K509 has biased composition (basic residues). T519 is subject to Phosphothreonine. Phosphoserine is present on residues S520, S522, S523, S536, S538, and S546. Residues D569–L578 carry the Clathrin box motif. The residue at position 592 (S592) is a Phosphoserine. The interval L681–E737 is disordered. Residue S750 is modified to Phosphoserine. The residue at position 760 (R760) is an Omega-N-methylarginine. Disordered stretches follow at residues P763–G783 and S935–E1016. The span at L954–S970 shows a compositional bias: pro residues. Composition is skewed to basic and acidic residues over residues D977 to Q988 and Q1007 to E1016.

In terms of assembly, interacts with RAB35. Interacts with clathrin and with the adapter protein complex 2, AP-2. Interacts with ITSN1 and SH3GL2. Interacts (when phosphorylated) with YWHAE. In terms of processing, phosphorylated on serine and/or threonine in an Akt-dependent manner. Phosphorylation probably regulates the guanine nucleotide exchange factor (GEF) activity, possibly by disrupting an intramolecular interaction between the DENN domain and the C-terminus of the protein, thereby relieving the autoinhibition.

The protein resides in the cytoplasmic vesicle. It is found in the clathrin-coated vesicle membrane. The protein localises to the presynaptic cell membrane. The guanine nucleotide exchange factor (GEF) activity is autoinhibited. Autoinhibition may be the result of intramolecular interaction between the DENN domain and the C-terminus, which is disrupted upon phosphorylation. Activation is regulated by Akt activation. Its function is as follows. Guanine nucleotide exchange factor (GEF) regulating clathrin-mediated endocytosis through RAB35 activation. Promotes the exchange of GDP to GTP, converting inactive GDP-bound RAB35 into its active GTP-bound form. Regulates clathrin-mediated endocytosis of synaptic vesicles and mediates exit from early endosomes. Binds phosphatidylinositol-phosphates (PtdInsPs), with some preference for PtdIns(3)P. This chain is DENN domain-containing protein 1A (Dennd1a), found in Mus musculus (Mouse).